We begin with the raw amino-acid sequence, 437 residues long: MFEIREKPEMVERAMLVSVYFDPSEAGEKQAMLDELEDLVSNLGIGIAGKHLIKSRDMHAKFLCGTGKAQEVKQLALDCRADCVVFDNMLSPSQQREWERLVDECVIDREEVILDIFARRARTREATLQVELARMQYSLPRMARMWNHLDRQGGGSGGGKGGGGAARGEGEKQIEVDRRLARARIEAIQRELVLVTRQRATQRKERERQAVATAAIVGYTNAGKSSLLSLVSGSEVMARDMLFATLDTTTRKIELPHGQPLLLTDTVGFIRNLPHRLVEAFKSTLEEAVLADFLIQVVDASDPEAVRHYETTLEVLNELGAGDKPMIVVLNKVDLVPEERRGALETLLAPHFSGRVVPMSVKEGNGEGDLLNACVEMLESRVRRARFLIPYTRSDLVAAMHSEGKVFSTEYVEEGTLLEAVLPVAFYNKLESFLADR.

Positions 150-173 (DRQGGGSGGGKGGGGAARGEGEKQ) are disordered. Over residues 152 to 167 (QGGGSGGGKGGGGAAR) the composition is skewed to gly residues. The region spanning 212–382 (ATAAIVGYTN…ACVEMLESRV (171 aa)) is the Hflx-type G domain. GTP contacts are provided by residues 218 to 225 (GYTNAGKS), 243 to 247 (FATLD), 265 to 268 (DTVG), 331 to 334 (NKVD), and 360 to 362 (SVK). Residues Ser-225 and Thr-245 each contribute to the Mg(2+) site.

It belongs to the TRAFAC class OBG-HflX-like GTPase superfamily. HflX GTPase family. Monomer. Associates with the 50S ribosomal subunit. The cofactor is Mg(2+).

It is found in the cytoplasm. In terms of biological role, GTPase that associates with the 50S ribosomal subunit and may have a role during protein synthesis or ribosome biogenesis. This Akkermansia muciniphila (strain ATCC BAA-835 / DSM 22959 / JCM 33894 / BCRC 81048 / CCUG 64013 / CIP 107961 / Muc) protein is GTPase HflX.